A 587-amino-acid polypeptide reads, in one-letter code: Kelch-like protein 3 (587 aa).

Position 10 is a phosphoserine (Ser10). One can recognise a BTB domain in the interval 50-117 (CDVMIVAEDV…VYTAEIEVTE (68 aa)). Residues 152 to 254 (CLGIRAFADV…PRDYLVQTVE (103 aa)) form the BACK domain. Position 295 is a phosphothreonine (Thr295). Kelch repeat units lie at residues 302–347 (VMIV…FMAG), 348–394 (HVYA…VLND), 396–441 (LYAV…VVEG), 442–490 (KLYA…VLSG), 491–537 (QLYA…AVNG), and 539–585 (LYVV…VIHK). At Thr375 the chain carries Phosphothreonine. Ser376 and Ser433 each carry phosphoserine.

The protein belongs to the KLHL3 family. As to quaternary structure, homodimer. Component of the BCR(KLHL3) E3 ubiquitin ligase complex, at least composed of CUL3 and KLHL3 and RBX1. Interacts with CLDN8. Post-translationally, phosphorylation at Ser-433 by PKA or PKC decreases the interaction with WNK1 and WNK4, leading to inhibit their degradation by the BCR(KLHL3) complex. Phosphorylated at Ser-433 by PKC in response to angiotensin II signaling, decreasing ability to promote degradation of WNK1 and WNK4, leading to activation of Na-Cl cotransporter SLC12A3/NCC. Phosphorylation at Ser-433 is increased by insulin. Dephosphorylated at Ser-433 by calcineurin PPP3CA, promoting degradation of WNK1 and WNK4.

It localises to the cytoplasm. The protein localises to the cytoskeleton. It is found in the cytosol. It participates in protein modification; protein ubiquitination. Functionally, substrate-specific adapter of a BCR (BTB-CUL3-RBX1) E3 ubiquitin ligase complex that acts as a regulator of ion transport in the distal nephron. The BCR(KLHL3) complex acts by mediating ubiquitination and degradation of WNK1 and WNK4, two activators of Na-Cl cotransporter SLC12A3/NCC in distal convoluted tubule cells of kidney, thereby regulating NaCl reabsorption. The BCR(KLHL3) complex also mediates ubiquitination and degradation of WNK3. The BCR(KLHL3) complex also mediates ubiquitination of CLDN8, a tight-junction protein required for paracellular chloride transport in the kidney, leading to its degradation. This Pongo abelii (Sumatran orangutan) protein is Kelch-like protein 3 (KLHL3).